Here is a 131-residue protein sequence, read N- to C-terminus: Lysosomal enzyme trafficking factor (131 aa).

2 helical membrane passes run 8 to 28 (MGWI…YYVF) and 66 to 86 (LPFW…FLFL).

This sequence belongs to the LYSET family.

Its subcellular location is the golgi apparatus membrane. In terms of biological role, required for mannose-6-phosphate-dependent trafficking of lysosomal enzymes. LYSET bridges GlcNAc-1-phosphate transferase (GNPTAB), to the membrane-bound transcription factor site-1 protease (MBTPS1), thus allowing proteolytic activation of the GNPTAB. GNPTAB is involved in the regulation of M6P-dependent Golgi-to-lysosome trafficking of lysosomal enzymes. LYSET is thus an essential factor for maturation and delivery of lysosomal hydrolases. The chain is Lysosomal enzyme trafficking factor (LYSET) from Gallus gallus (Chicken).